The primary structure comprises 285 residues: 2-dehydro-3-deoxyphosphooctonate aldolase (285 aa).

The protein belongs to the KdsA family.

The protein resides in the cytoplasm. It carries out the reaction D-arabinose 5-phosphate + phosphoenolpyruvate + H2O = 3-deoxy-alpha-D-manno-2-octulosonate-8-phosphate + phosphate. It participates in carbohydrate biosynthesis; 3-deoxy-D-manno-octulosonate biosynthesis; 3-deoxy-D-manno-octulosonate from D-ribulose 5-phosphate: step 2/3. It functions in the pathway bacterial outer membrane biogenesis; lipopolysaccharide biosynthesis. The sequence is that of 2-dehydro-3-deoxyphosphooctonate aldolase from Polaromonas naphthalenivorans (strain CJ2).